Reading from the N-terminus, the 383-residue chain is Neuropeptide Y receptor type 1 (383 aa).

The Extracellular portion of the chain corresponds to 1–44; sequence MNSTLSSQVENHSIYYNFSEKNSQFLAFENDDCHLPLAMIFTLA. Residues Asn2, Asn11, and Asn17 are each glycosylated (N-linked (GlcNAc...) asparagine). The helical transmembrane segment at 45–65 threads the bilayer; sequence LAYGAVIILGVSGNLALIIII. The Cytoplasmic segment spans residues 66 to 76; the sequence is LKQKEMRNVTN. A helical membrane pass occupies residues 77–97; that stretch reads ILIVNLSFSDLLVAIMCLPFT. Topologically, residues 98–116 are extracellular; it reads FVYTLMDHWVFGEVMCKLN. A disulfide bond links Cys113 and Cys198. A helical transmembrane segment spans residues 117–137; the sequence is PFVQCVSITVSIFSLVLIAVE. Over 138 to 154 the chain is Cytoplasmic; that stretch reads RHQLIINPRGWRPSNRH. The chain crosses the membrane as a helical span at residues 155–175; that stretch reads AYVGIAVIWVLAVASSLPFLI. Topologically, residues 176 to 211 are extracellular; the sequence is YQVLTDEPFQNVTLDAFKDKYVCFDKFLSDSHRLSY. A helical membrane pass occupies residues 212–232; the sequence is TTLLLVLQYFGPLCFIFICYF. Residues 233–260 are Cytoplasmic-facing; that stretch reads KIYIRLKRRNNMMDKMRDNKYRSSETKR. The helical transmembrane segment at 261–281 threads the bilayer; sequence INVMLLSIVVAFAVCWLPLTI. Over 282-299 the chain is Extracellular; sequence FNTVFDWNHQIIATCNHN. A helical transmembrane segment spans residues 300-320; the sequence is LLFLLCHLTAMISTCINPIFY. Residues 321–383 lie on the Cytoplasmic side of the membrane; that stretch reads GFLNKNFQRD…KIHSDDNEKI (63 aa). Cys338 carries S-palmitoyl cysteine lipidation. Residue Ser368 is modified to Phosphoserine.

The protein belongs to the G-protein coupled receptor 1 family.

The protein resides in the cell membrane. Functionally, receptor for neuropeptide Y and peptide YY. In Sus scrofa (Pig), this protein is Neuropeptide Y receptor type 1 (NPY1R).